Reading from the N-terminus, the 160-residue chain is Envelope glycoprotein L (160 aa).

Positions 1-22 (MASHKWLLQMIVFLKTITIAYC) are cleaved as a signal peptide. The interaction with gH stretch occupies residues 24-149 (HLQDDTPLFF…TNIPENGCVW (126 aa)). Positions 28 to 160 (DTPLFFGAKP…ADRLFQRVCQ (133 aa)) constitute a gL alphaherpesvirus-type domain. 2 disulfide bridges follow: Cys-49–Cys-80 and Cys-147–Cys-159.

It belongs to the herpesviridae glycoprotein L (gL) family. Alphaherpesvirinae gL subfamily. In terms of assembly, interacts with glycoprotein H (gH); this interaction is necessary for the correct processing and cell surface expression of gH. The heterodimer gH/gL seems to interact with gB trimers during fusion.

The protein resides in the virion membrane. Its subcellular location is the host cell membrane. It is found in the host Golgi apparatus. It localises to the host trans-Golgi network. Its function is as follows. The heterodimer glycoprotein H-glycoprotein L is required for the fusion of viral and plasma membranes leading to virus entry into the host cell. Acts as a functional inhibitor of gH and maintains gH in an inhibited form. Upon binding to host integrins, gL dissociates from gH leading to activation of the viral fusion glycoproteins gB and gH. The sequence is that of Envelope glycoprotein L from Varicella-zoster virus (strain Oka vaccine) (HHV-3).